The chain runs to 290 residues: Bifunctional protein FolD 3 (290 aa).

NADP(+) contacts are provided by residues 163–165 (GHS) and Ile-229.

Belongs to the tetrahydrofolate dehydrogenase/cyclohydrolase family. As to quaternary structure, homodimer.

The catalysed reaction is (6R)-5,10-methylene-5,6,7,8-tetrahydrofolate + NADP(+) = (6R)-5,10-methenyltetrahydrofolate + NADPH. It carries out the reaction (6R)-5,10-methenyltetrahydrofolate + H2O = (6R)-10-formyltetrahydrofolate + H(+). It functions in the pathway one-carbon metabolism; tetrahydrofolate interconversion. In terms of biological role, catalyzes the oxidation of 5,10-methylenetetrahydrofolate to 5,10-methenyltetrahydrofolate and then the hydrolysis of 5,10-methenyltetrahydrofolate to 10-formyltetrahydrofolate. The chain is Bifunctional protein FolD 3 from Roseobacter denitrificans (strain ATCC 33942 / OCh 114) (Erythrobacter sp. (strain OCh 114)).